The chain runs to 633 residues: Kelch repeat and BTB domain-containing protein 11 (633 aa).

The tract at residues 1–118 (MENSVAPFVL…EDPPSRHEHA (118 aa)) is disordered. Residues 35–60 (STAQTPCSLSASLCFSSGDDSPPQSR) are compositionally biased toward polar residues. Low complexity predominate over residues 61-73 (ASAAEGSEASPPS). Ser-70, Ser-73, Ser-92, Ser-95, Ser-107, and Ser-113 each carry phosphoserine. One can recognise a BTB domain in the interval 146 to 206 (PDLVIEVAGR…AYSGRMAGVR (61 aa)). Kelch repeat units lie at residues 317-365 (RPQS…VLFN), 366-418 (YLFL…ALDG), 419-463 (HLYA…TCNG), and 465-506 (IYVS…ALDG).

The sequence is that of Kelch repeat and BTB domain-containing protein 11 (Kbtbd11) from Mus musculus (Mouse).